A 757-amino-acid polypeptide reads, in one-letter code: MDVNPTLLFLKVPAQNAISTTFPYTGDPPYSHGTGTGYTMDTVNRTHQYSEKGKWTTNTETGAPQLNPIDGPLPEDNEPSGYAQTDCVLEAMAFLEESHPGIFENSCLETMEVIQQTRVDKLTQGRQTYDWTLNRNQPAATALANTIEVFRSNGLTANESGRLIDFLKDVIESMDKEEMEITTHFQRKRRVRDNMTKKMVTQRTIGKKKQRLNKRIYLIRALTLNTMTKDAERGKLKRRAIATPGMQIRGFVYFVETLARSICENLEQSGLPVGGNEKKAKLANVVRKMMTNSQDTELSFTITGDNTKWNENQNPRIFLAMITYITRNQPEWFRNVLSIAPIMFSNKMARLGKGYMFKSKSMKLRTQIPAEMLTSIDLKYFNESTRKKIEKIRPLLIDGTVSLSPGMMMGMFNMLSTVLGVSILNLGQKKYTKTTYWWDGLQSSDDFALIVNAPNHEGIQAGVDRFYRTCKLVGINMSKKKSYTNRTGTFEFTSFFYRYGFVANFSMELPSFGVSGINESDDMSIGVTVIKNNMINNDLGPATAQMALQLFIKDYRYTYRCHRGDTQIQTRRSFELKKLWEQTRSKAGLLISDGGPNLYNIRNLHIPEVCLKWELMDEDYQGRLCNPLNPFVSHKEIESVNNAVVMPAHGPAKSMEYDAVATTHSWIPKRNRSILNTSQRGILEDQQMYQKCCNLFEKFFPSSSYRRPVGISSMVEAMVSRARIDARIDFESGRIKKEEFAEIMKICSTIEELRRQK.

The interval 50-82 (SEKGKWTTNTETGAPQLNPIDGPLPEDNEPSGY) is disordered. The span at 55 to 64 (WTTNTETGAP) shows a compositional bias: polar residues. 2 consecutive short sequence motifs (nuclear localization signal) follow at residues 187–195 (RKRRVRDNM) and 203–216 (RTIG…NKRI). A promoter-binding site region spans residues 249–256 (RGFVYFVE). One can recognise a RdRp catalytic domain in the interval 286-483 (VRKMMTNSQD…GINMSKKKSY (198 aa)).

Belongs to the influenza viruses polymerase PB1 family. Influenza RNA polymerase is composed of three subunits: PB1, PB2 and PA. Interacts (via N-terminus) with PA (via C-terminus). Interacts (via C-terminus) with PB2 (via N-terminus); this interaction is essential for transcription initiation. Post-translationally, phosphorylated by host PRKCA.

It is found in the host nucleus. The protein localises to the host cytoplasm. The enzyme catalyses RNA(n) + a ribonucleoside 5'-triphosphate = RNA(n+1) + diphosphate. Functionally, RNA-dependent RNA polymerase which is responsible for replication and transcription of virus RNA segments. The transcription of viral mRNAs occurs by a unique mechanism called cap-snatching. 5' methylated caps of cellular mRNAs are cleaved after 10-13 nucleotides by PA. In turn, these short capped RNAs are used as primers by PB1 for transcription of viral mRNAs. During virus replication, PB1 initiates RNA synthesis and copy vRNA into complementary RNA (cRNA) which in turn serves as a template for the production of more vRNAs. The chain is RNA-directed RNA polymerase catalytic subunit from Influenza A virus (strain A/Leningrad/134/47/1957 H2N2).